The sequence spans 287 residues: Shikimate kinase (287 aa).

87 to 97 (PLASGLKSSSA) is an ATP binding site.

It belongs to the GHMP kinase family. Archaeal shikimate kinase subfamily.

It is found in the cytoplasm. It catalyses the reaction shikimate + ATP = 3-phosphoshikimate + ADP + H(+). The protein operates within metabolic intermediate biosynthesis; chorismate biosynthesis; chorismate from D-erythrose 4-phosphate and phosphoenolpyruvate: step 5/7. The chain is Shikimate kinase from Methanococcoides burtonii (strain DSM 6242 / NBRC 107633 / OCM 468 / ACE-M).